We begin with the raw amino-acid sequence, 43 residues long: uncharacterized protein (43 aa).

Residues 21–41 (SSFALIVVLFILLIIVGAAIF) traverse the membrane as a helical segment.

Belongs to the SscA family.

It localises to the membrane. This is an uncharacterized protein from Bacillus subtilis (strain 168).